We begin with the raw amino-acid sequence, 327 residues long: E3 ubiquitin ligase RNF121 (327 aa).

Residue alanine 2 is modified to N-acetylalanine. 5 helical membrane-spanning segments follow: residues 50–70 (MHAE…LLLV), 79–99 (SYNM…TVKL), 100–120 (HWWR…FVTF), 148–168 (ATGI…NLLF), and 172–192 (PEDA…YGVL). The RING-type; atypical zinc-finger motif lies at 226-276 (CAVCGQQIFVDVSEEGIIENTYRLSCNHVFHEFCIRGWCIVGKKQTCPYCK). The chain crosses the membrane as a helical span at residues 306–326 (LVAWQPVIIGVVQGINYILGL).

Belongs to the RNF121 family.

It is found in the endoplasmic reticulum membrane. It catalyses the reaction S-ubiquitinyl-[E2 ubiquitin-conjugating enzyme]-L-cysteine + [acceptor protein]-L-lysine = [E2 ubiquitin-conjugating enzyme]-L-cysteine + N(6)-ubiquitinyl-[acceptor protein]-L-lysine.. It participates in protein modification; protein ubiquitination. Its function is as follows. E3 ubiquitin ligase which accepts ubiquitin and transfers it to substrates thereby promoting their degradation by the endoplasmic reticulum-associated degradation (ERAD) pathway which is a pathway involved in ubiquitin-dependent degradation of misfolded endoplasmic reticulum proteins. May regulate the unfolded protein response to reduce endoplasmic reticulum stress. This Homo sapiens (Human) protein is E3 ubiquitin ligase RNF121 (RNF121).